We begin with the raw amino-acid sequence, 324 residues long: Putative arsenical pump-driving ATPase (324 aa).

21-28 is an ATP binding site; it reads GKGGVGKT.

The protein belongs to the arsA ATPase family.

The enzyme catalyses arsenite(in) + ATP + H2O = arsenite(out) + ADP + phosphate + H(+). Anion-transporting ATPase. Catalyzes the extrusion of arsenite. The chain is Putative arsenical pump-driving ATPase from Methanothermobacter thermautotrophicus (strain ATCC 29096 / DSM 1053 / JCM 10044 / NBRC 100330 / Delta H) (Methanobacterium thermoautotrophicum).